The primary structure comprises 353 residues: Guanine nucleotide-binding protein G(q) subunit alpha (353 aa).

Residues Cys-3 and Cys-4 are each lipidated (S-palmitoyl cysteine). Positions 32–353 constitute a G-alpha domain; the sequence is RELKLLLLGT…QLNLKEYNLV (322 aa). Residues 35 to 48 are G1 motif; the sequence is KLLLLGTGESGKST. Residues 40–47, 174–180, 199–203, 268–271, and Ala-325 contribute to the GTP site; these read GTGESGKS, LRVRAPT, DVGGQ, and NKKD. Positions 47 and 180 each coordinate Mg(2+). The segment at 172-180 is G2 motif; sequence DILRVRAPT. The interval 195–204 is G3 motif; sequence FRMVDVGGQR. The G4 motif stretch occupies residues 264-271; the sequence is ILFLNKKD. Positions 323 to 328 are G5 motif; it reads TCATDT.

It belongs to the G-alpha family. G(q) subfamily. G proteins are composed of 3 units; alpha, beta and gamma. The alpha chain contains the guanine nucleotide binding site.

Functionally, guanine nucleotide-binding proteins (G proteins) are involved as modulators or transducers in various transmembrane signaling systems. The chain is Guanine nucleotide-binding protein G(q) subunit alpha from Homarus americanus (American lobster).